The sequence spans 220 residues: 7-cyano-7-deazaguanine synthase (220 aa).

7–17 is an ATP binding site; sequence ISGGMDSSTAA. Zn(2+) contacts are provided by C187, C195, C198, and C201.

This sequence belongs to the QueC family. Zn(2+) is required as a cofactor.

The catalysed reaction is 7-carboxy-7-deazaguanine + NH4(+) + ATP = 7-cyano-7-deazaguanine + ADP + phosphate + H2O + H(+). The protein operates within purine metabolism; 7-cyano-7-deazaguanine biosynthesis. Its function is as follows. Catalyzes the ATP-dependent conversion of 7-carboxy-7-deazaguanine (CDG) to 7-cyano-7-deazaguanine (preQ(0)). This Campylobacter hominis (strain ATCC BAA-381 / DSM 21671 / CCUG 45161 / LMG 19568 / NCTC 13146 / CH001A) protein is 7-cyano-7-deazaguanine synthase.